The sequence spans 380 residues: Dynactin subunit 2 (380 aa).

The interval Met-1–Asp-32 is disordered. Over residues Glu-21 to Asp-32 the composition is skewed to acidic residues. A phosphoserine mark is found at Ser-49, Ser-58, and Ser-86. Coiled coils occupy residues Val-100–Asp-135 and Glu-353–Ser-377.

The protein belongs to the dynactin subunit 2 family. Subunit of dynactin, a multiprotein complex associated with dynein.

It is found in the cytoplasm. Its subcellular location is the cytoskeleton. It localises to the membrane. Functionally, modulates cytoplasmic dynein binding to an organelle, and plays a role in prometaphase chromosome alignment and spindle organization during mitosis. May play a role in synapse formation during brain development. This is Dynactin subunit 2 from Drosophila melanogaster (Fruit fly).